The chain runs to 101 residues: Putative defensin-like protein 86 (101 aa).

The first 27 residues, 1–27 (MAITKMSSLIILSLMMLTFIYIPMISG), serve as a signal peptide directing secretion. Disulfide bonds link cysteine 35–cysteine 71, cysteine 39–cysteine 59, cysteine 45–cysteine 69, and cysteine 49–cysteine 70.

The protein belongs to the DEFL family.

It is found in the secreted. The protein is Putative defensin-like protein 86 (LCR82) of Arabidopsis thaliana (Mouse-ear cress).